The chain runs to 1866 residues: Protein strawberry notch homolog (1866 aa).

Over residues 19–28 (QQSSPTPSTS) the composition is skewed to low complexity. Disordered regions lie at residues 19 to 63 (QQSS…HSSS), 132 to 151 (TAPT…IVPK), 156 to 253 (LFET…GLPI), 561 to 581 (GMAS…QKAK), and 1112 to 1308 (GLSG…ARGS). Polar residues-rich tracts occupy residues 37-63 (QSFS…HSSS) and 134-146 (PTVN…TPTV). The segment covering 161 to 176 (TADSPTPSGDTSTTAS) has biased composition (low complexity). 2 stretches are compositionally biased toward polar residues: residues 191–203 (DRQN…TARS) and 210–228 (TPST…LTQR). Positions 229–239 (SHTSSPASSAS) are enriched in low complexity. Polar residues predominate over residues 566 to 577 (RLQTTPQPLTKS). Residues 1112–1126 (GLSGIGRSSMSSSTG) are compositionally biased toward low complexity. A compositionally biased stretch (acidic residues) spans 1142 to 1152 (DGSDDEVENDM). A compositionally biased stretch (basic and acidic residues) spans 1164–1177 (ESAREEAEGARTLE). Over residues 1194–1213 (SSSDDSDEEVVKDEDEDEEA) the composition is skewed to acidic residues. 2 stretches are compositionally biased toward basic and acidic residues: residues 1262–1281 (RDEE…EERR) and 1290–1304 (RRAE…EELQ).

The protein belongs to the SBNO family. Expressed in the somatic gonad, neurons, hypodermal cells, seam cells, the excretory system, and intestinal cells (at protein level).

The protein resides in the nucleus. Functionally, transcriptional activator that functions upstream of the let-60/Ras and let-23/EGFR signaling pathways to positively regulate lin-3 expression and thereby promote vulval induction. Plays a role in excretory duct development. Plays a role in male tail development. This chain is Protein strawberry notch homolog, found in Caenorhabditis elegans.